The chain runs to 191 residues: MSKINGKIAVFTVFLVLVVVYGYMQAPTNREVKIDSFLIQFENGTTEPEVKAILENYNMTLNYSIDCNSDNGGYKYYIKVDKDDMPDVVKDGLKKDKNWTDSGSPSFTKGDYVIYPVTEQAIHDKNFLEILKRHNIQVKTFVWCLVSYRDNSTRYDVLGKNCITEKDANRITNELEMNENVLIVMPEYICY.

This sequence belongs to the UPF0228 family.

In Methanosarcina mazei (strain ATCC BAA-159 / DSM 3647 / Goe1 / Go1 / JCM 11833 / OCM 88) (Methanosarcina frisia), this protein is UPF0228 protein MM_1428.